Here is a 173-residue protein sequence, read N- to C-terminus: MPRSQRNDNFIDKSFTVMADLILKVLPTNQKAKEAFAYYRDGMSAQGDGEYAEALENYQEALRLEEDPNDRAFILYNMALVYASNGEHNRALEQYEQALALNAKMPQVLNNMAVIHHHLGSIAQEKGESDEADRRFDLAADFWSKAIRLAPNNYIEAQNWLKTTGRGSADVYL.

TPR repeat units follow at residues 35 to 68 (AFAY…EEDP), 72 to 105 (AFIL…NAKM), and 120 to 153 (GSIA…APNN).

This sequence belongs to the Ycf3 family.

The protein resides in the cellular thylakoid membrane. Essential for the assembly of the photosystem I (PSI) complex. May act as a chaperone-like factor to guide the assembly of the PSI subunits. This chain is Photosystem I assembly protein Ycf3, found in Synechococcus sp. (strain RCC307).